The sequence spans 232 residues: Acyl-protein thioesterase 1 (232 aa).

Active-site charge relay system residues include Ser-125, Asp-179, and His-212.

Belongs to the AB hydrolase superfamily. AB hydrolase 2 family.

The protein localises to the cytoplasm. It is found in the nucleus. It catalyses the reaction S-hexadecanoyl-L-cysteinyl-[protein] + H2O = L-cysteinyl-[protein] + hexadecanoate + H(+). Its function is as follows. Hydrolyzes fatty acids from S-acylated cysteine residues in proteins with a strong preference for palmitoylated G-alpha proteins over other acyl substrates. Mediates the deacylation of G-alpha proteins such as GPA1 in vivo, but has weak or no activity toward palmitoylated Ras proteins. Has weak lysophospholipase activity in vitro; however such activity may not exist in vivo. This Debaryomyces hansenii (strain ATCC 36239 / CBS 767 / BCRC 21394 / JCM 1990 / NBRC 0083 / IGC 2968) (Yeast) protein is Acyl-protein thioesterase 1.